Reading from the N-terminus, the 364-residue chain is DNA replication and repair protein RecF (364 aa).

30–37 (GNNGMGKT) contacts ATP.

Belongs to the RecF family.

It is found in the cytoplasm. The RecF protein is involved in DNA metabolism; it is required for DNA replication and normal SOS inducibility. RecF binds preferentially to single-stranded, linear DNA. It also seems to bind ATP. The protein is DNA replication and repair protein RecF of Porphyromonas gingivalis (strain ATCC 33277 / DSM 20709 / CIP 103683 / JCM 12257 / NCTC 11834 / 2561).